Here is a 251-residue protein sequence, read N- to C-terminus: Cell division protein ZapD (251 aa).

This sequence belongs to the ZapD family. Interacts with FtsZ.

It is found in the cytoplasm. Its function is as follows. Cell division factor that enhances FtsZ-ring assembly. Directly interacts with FtsZ and promotes bundling of FtsZ protofilaments, with a reduction in FtsZ GTPase activity. This Paraburkholderia xenovorans (strain LB400) protein is Cell division protein ZapD.